Reading from the N-terminus, the 148-residue chain is Snaclec 2 (148 aa).

Positions 1-23 (MGRFIFVSFGLLVVFLSLSGTEA) are cleaved as a signal peptide. Intrachain disulfides connect Cys27/Cys38, Cys55/Cys144, and Cys121/Cys136. The C-type lectin domain maps to 34-145 (YDQNCYKAFE…CSGTHSFVCK (112 aa)).

This sequence belongs to the snaclec family. In terms of assembly, heterodimer; disulfide-linked. Expressed by the venom gland.

It localises to the secreted. Interferes with one step of hemostasis (modulation of platelet aggregation, or coagulation cascade, for example). This Echis ocellatus (Ocellated saw-scaled viper) protein is Snaclec 2.